The sequence spans 76 residues: Acyl carrier protein (76 aa).

Positions 1-76 (MATFDDVKDV…AAVDYIDNNQ (76 aa)) constitute a Carrier domain. Serine 36 carries the O-(pantetheine 4'-phosphoryl)serine modification.

Belongs to the acyl carrier protein (ACP) family. In terms of processing, 4'-phosphopantetheine is transferred from CoA to a specific serine of apo-ACP by AcpS. This modification is essential for activity because fatty acids are bound in thioester linkage to the sulfhydryl of the prosthetic group.

It is found in the cytoplasm. The protein operates within lipid metabolism; fatty acid biosynthesis. In terms of biological role, carrier of the growing fatty acid chain in fatty acid biosynthesis. This chain is Acyl carrier protein, found in Deinococcus radiodurans (strain ATCC 13939 / DSM 20539 / JCM 16871 / CCUG 27074 / LMG 4051 / NBRC 15346 / NCIMB 9279 / VKM B-1422 / R1).